A 265-amino-acid chain; its full sequence is Mlc titration factor A (265 aa).

His111, His148, His152, and Glu211 together coordinate Zn(2+).

It belongs to the MtfA family. In terms of assembly, interacts with Mlc. Zn(2+) serves as cofactor.

The protein localises to the cytoplasm. Functionally, involved in the modulation of the activity of the glucose-phosphotransferase system (glucose-PTS). Interacts with the transcriptional repressor Mlc, preventing its interaction with DNA and leading to the modulation of expression of genes regulated by Mlc, including ptsG, which encodes the PTS system glucose-specific EIICB component. In terms of biological role, shows zinc-dependent metallopeptidase activity. The sequence is that of Mlc titration factor A from Escherichia fergusonii (strain ATCC 35469 / DSM 13698 / CCUG 18766 / IAM 14443 / JCM 21226 / LMG 7866 / NBRC 102419 / NCTC 12128 / CDC 0568-73).